The sequence spans 250 residues: Probable S-methyl-5'-thioinosine phosphorylase (250 aa).

Residues T14 and R56 to H57 each bind phosphate. M189 is a binding site for substrate. T190 lines the phosphate pocket. Residue N213–A215 coordinates substrate.

Belongs to the PNP/MTAP phosphorylase family. MTAP subfamily. As to quaternary structure, homotrimer.

It catalyses the reaction S-methyl-5'-thioinosine + phosphate = 5-(methylsulfanyl)-alpha-D-ribose 1-phosphate + hypoxanthine. It functions in the pathway purine metabolism; purine nucleoside salvage. In terms of biological role, catalyzes the reversible phosphorylation of S-methyl-5'-thioinosine (MTI) to hypoxanthine and 5-methylthioribose-1-phosphate. Involved in the breakdown of S-methyl-5'-thioadenosine (MTA), a major by-product of polyamine biosynthesis. Catabolism of (MTA) occurs via deamination to MTI and phosphorolysis to hypoxanthine. This is Probable S-methyl-5'-thioinosine phosphorylase from Xanthomonas campestris pv. campestris (strain ATCC 33913 / DSM 3586 / NCPPB 528 / LMG 568 / P 25).